Here is a 250-residue protein sequence, read N- to C-terminus: Glutamate racemase (250 aa).

Residues 7–8 (DS) and 39–40 (YG) contribute to the substrate site. The active-site Proton donor/acceptor is cysteine 70. 71–72 (NT) is a substrate binding site. The Proton donor/acceptor role is filled by cysteine 180. 181–182 (TH) contributes to the substrate binding site.

The protein belongs to the aspartate/glutamate racemases family.

It carries out the reaction L-glutamate = D-glutamate. It participates in cell wall biogenesis; peptidoglycan biosynthesis. Its function is as follows. Provides the (R)-glutamate required for cell wall biosynthesis. This Campylobacter jejuni subsp. jejuni serotype O:2 (strain ATCC 700819 / NCTC 11168) protein is Glutamate racemase.